Consider the following 528-residue polypeptide: GMP synthase [glutamine-hydrolyzing] (528 aa).

One can recognise a Glutamine amidotransferase type-1 domain in the interval 13–204 (SILILDFGSQ…VYGISSCVAD (192 aa)). Catalysis depends on Cys90, which acts as the Nucleophile. Active-site residues include His178 and Glu180. The GMPS ATP-PPase domain maps to 205-403 (WTTETYIEET…LGLPDEIIKR (199 aa)). 232-238 (SGGVDSS) is an ATP binding site.

In terms of assembly, homodimer.

It carries out the reaction XMP + L-glutamine + ATP + H2O = GMP + L-glutamate + AMP + diphosphate + 2 H(+). The protein operates within purine metabolism; GMP biosynthesis; GMP from XMP (L-Gln route): step 1/1. In terms of biological role, catalyzes the synthesis of GMP from XMP. This Prochlorococcus marinus (strain MIT 9312) protein is GMP synthase [glutamine-hydrolyzing].